Here is a 263-residue protein sequence, read N- to C-terminus: MTHPQPFIAVIPARLASTRLPNKPLADVGGKPMVVRVAERAREAGAQQVLVASDTQAVLDAARDHGFDALLTRADHPSGTDRLAEVAARFGWRDDTVVVNVQGDEPLIDPTLVRDVASHLAAHPDCAIATAAHPIHDAADVFNPNVVKVALDARSVAMYFSRAPIPWSRDAYQPHWPDVAAMPAPAFPVYRHIGLYAYRARFLRTYPSLAQAPIEQAEQLEQLRAMWHGERIAVLITERAPEAGVDTPADLARVQALFRPSSK.

The protein belongs to the KdsB family.

The protein localises to the cytoplasm. The enzyme catalyses 3-deoxy-alpha-D-manno-oct-2-ulosonate + CTP = CMP-3-deoxy-beta-D-manno-octulosonate + diphosphate. It functions in the pathway nucleotide-sugar biosynthesis; CMP-3-deoxy-D-manno-octulosonate biosynthesis; CMP-3-deoxy-D-manno-octulosonate from 3-deoxy-D-manno-octulosonate and CTP: step 1/1. It participates in bacterial outer membrane biogenesis; lipopolysaccharide biosynthesis. Activates KDO (a required 8-carbon sugar) for incorporation into bacterial lipopolysaccharide in Gram-negative bacteria. The polypeptide is 3-deoxy-manno-octulosonate cytidylyltransferase (Burkholderia vietnamiensis (strain G4 / LMG 22486) (Burkholderia cepacia (strain R1808))).